We begin with the raw amino-acid sequence, 197 residues long: Putative NADH dehydrogenase/NAD(P)H nitroreductase Plav_3612 (197 aa).

This sequence belongs to the nitroreductase family. HadB/RutE subfamily. Requires FMN as cofactor.

This is Putative NADH dehydrogenase/NAD(P)H nitroreductase Plav_3612 from Parvibaculum lavamentivorans (strain DS-1 / DSM 13023 / NCIMB 13966).